A 218-amino-acid chain; its full sequence is Glycerol-3-phosphate acyltransferase 2 (218 aa).

5 helical membrane-spanning segments follow: residues 6-26, 50-70, 85-105, 115-135, and 159-179; these read YLLI…VLVG, VMGP…GTLA, LLLI…FLKF, AGVF…VFLP, and FWFH…LLFV.

This sequence belongs to the PlsY family. In terms of assembly, probably interacts with PlsX.

The protein resides in the cell membrane. The enzyme catalyses an acyl phosphate + sn-glycerol 3-phosphate = a 1-acyl-sn-glycero-3-phosphate + phosphate. It participates in lipid metabolism; phospholipid metabolism. Functionally, catalyzes the transfer of an acyl group from acyl-phosphate (acyl-PO(4)) to glycerol-3-phosphate (G3P) to form lysophosphatidic acid (LPA). This enzyme utilizes acyl-phosphate as fatty acyl donor, but not acyl-CoA or acyl-ACP. This Lactobacillus johnsonii (strain CNCM I-12250 / La1 / NCC 533) protein is Glycerol-3-phosphate acyltransferase 2.